The chain runs to 540 residues: Esterase B1 (540 aa).

Cys-68 and Cys-81 are oxidised to a cystine. The active-site Acyl-ester intermediate is Ser-191. Active-site charge relay system residues include Glu-324 and His-442. N-linked (GlcNAc...) asparagine glycosylation is present at Asn-452.

This sequence belongs to the type-B carboxylesterase/lipase family.

The enzyme catalyses a carboxylic ester + H2O = an alcohol + a carboxylate + H(+). In terms of biological role, overproduction of nonspecific esterases is a common mechanism of resistance to organophosphate insecticides. The polypeptide is Esterase B1 (B1) (Culex pipiens (House mosquito)).